Reading from the N-terminus, the 185-residue chain is Comitin (185 aa).

One can recognise a Bulb-type lectin domain in the interval 1–123 (MELLRQGEHL…YKQILYSSKP (123 aa)). The segment at 138–185 (SGHPQSAYPPQQPGYGYPAQPGYPPQPGYPPQHGYPPQHGYPQQPGYY) is disordered. Over residues 141–157 (PQSAYPPQQPGYGYPAQ) the composition is skewed to low complexity. 5 consecutive repeat copies span residues 153 to 158 (GYPAQP), 159 to 164 (GYPPQP), 165 to 170 (GYPPQH), 171 to 176 (GYPPQH), and 177 to 182 (GYPQQP). Positions 153-182 (GYPAQPGYPPQPGYPPQHGYPPQHGYPQQP) are 5 X 6 AA tandem repeats of G-Y-P-X-Q-[PH]. Residues 158-171 (PGYPPQPGYPPQHG) show a composition bias toward pro residues. The segment covering 172 to 185 (YPPQHGYPQQPGYY) has biased composition (low complexity).

In terms of assembly, homodimer in solution. In terms of processing, the N-terminus is blocked.

The protein resides in the golgi apparatus membrane. It is found in the endomembrane system. The protein localises to the cytoplasm. Its subcellular location is the cytoskeleton. Its function is as follows. May have a role in cell motility. It has high affinity for both G-actin and F-actin. Binds to vesicle membranes via mannose residues and, by way of its interaction with actin, links these membranes to the cytoskeleton. This chain is Comitin (comA), found in Dictyostelium discoideum (Social amoeba).